A 20-amino-acid chain; its full sequence is Phospholipase A2 II-5b (20 aa).

The protein belongs to the phospholipase A2 family. Group I subfamily. It depends on Ca(2+) as a cofactor. Expressed by the venom gland.

The protein resides in the secreted. The enzyme catalyses a 1,2-diacyl-sn-glycero-3-phosphocholine + H2O = a 1-acyl-sn-glycero-3-phosphocholine + a fatty acid + H(+). In terms of biological role, snake venom phospholipase A2 (PLA2) that exhibits weak enzymatic activity. PLA2 catalyzes the calcium-dependent hydrolysis of the 2-acyl groups in 3-sn-phosphoglycerides. This is Phospholipase A2 II-5b from Notechis scutatus scutatus (Mainland tiger snake).